A 447-amino-acid chain; its full sequence is MRFRIYKRKVLILTLVVAACGFVLWSSNGRQRKNEALAPPLLDAEPARGAGGRGGDHPSVAVGIRRVSNVSAASLVPAVPQPEADNLTLRYRSLVYQLNFDQTLRNVDKAGTWAPRELVLVVQVHNRPEYLRLLLDSLRKAQGIDNVLVIFSHDFWSTEINQLIAGVNFCPVLQVFFPFSIQLYPNEFPGSDPRDCPRDLPKNAALKLGCINAEYPDSFGHYREAKFSQTKHHWWWKLHFVWERVKILRDYAGLILFLEEDHYLAPDFYHVFKKMWKLKQQECPECDVLSLGTYSASRSFYGMADKVDVKTWKSTEHNMGLALTRNAYQKLIECTDTFCTYDDYNWDWTLQYLTVSCLPKFWKVLVPQIPRIFHAGDCGMHHKKTCRPSTQSAQIESLLNNNKQYMFPETLTISEKFTVVAISPPRKNGGWGDIRDHELCKSYRRLQ.

Over 1–9 the chain is Cytoplasmic; it reads MRFRIYKRK. A helical; Signal-anchor for type II membrane protein membrane pass occupies residues 10-29; the sequence is VLILTLVVAACGFVLWSSNG. Topologically, residues 30 to 447 are lumenal; that stretch reads RQRKNEALAP…ELCKSYRRLQ (418 aa). N-linked (GlcNAc...) asparagine glycans are attached at residues asparagine 69 and asparagine 86. Residues 123 to 127 and aspartate 154 each bind substrate; that span reads QVHNR. The cysteines at positions 196 and 210 are disulfide-linked. 229 to 233 contacts substrate; it reads QTKHH. Position 261 (aspartate 261) interacts with Mn(2+). Cysteine 283 and cysteine 286 form a disulfide bridge. Arginine 298 is a binding site for substrate. 3 cysteine pairs are disulfide-bonded: cysteine 334–cysteine 357, cysteine 339–cysteine 440, and cysteine 378–cysteine 386. Histidine 374 contacts Mn(2+).

The protein belongs to the glycosyltransferase 16 (GT16) protein family. In terms of assembly, homodimer. The cofactor is Mn(2+).

The protein localises to the golgi apparatus membrane. It carries out the reaction an N(4)-{beta-D-GlcNAc-(1-&gt;2)-alpha-D-Man-(1-&gt;3)-[alpha-D-Man-(1-&gt;6)]-beta-D-Man-(1-&gt;4)-beta-D-GlcNAc-(1-&gt;4)-beta-D-GlcNAc}-L-asparaginyl-[protein] + UDP-N-acetyl-alpha-D-glucosamine = N(4)-{beta-D-GlcNAc-(1-&gt;2)-alpha-D-Man-(1-&gt;3)-[beta-D-GlcNAc-(1-&gt;2)-alpha-D-Man-(1-&gt;6)]-beta-D-Man-(1-&gt;4)-beta-D-GlcNAc-(1-&gt;4)-beta-D-GlcNAc}-L-asparaginyl-[protein] + UDP + H(+). Its pathway is protein modification; protein glycosylation. Functionally, plays an essential role in protein N-glycosylation. Catalyzes the transfer of N-acetylglucosamine (GlcNAc) onto the free terminal mannose moiety in the core structure of the nascent N-linked glycan chain, giving rise to the second branch in complex glycans. This chain is Alpha-1,6-mannosyl-glycoprotein 2-beta-N-acetylglucosaminyltransferase (MGAT2), found in Homo sapiens (Human).